The chain runs to 216 residues: Adenylate kinase (216 aa).

Residue Gly11–Thr16 participates in ATP binding. The tract at residues Ala31 to Val60 is NMP. AMP-binding positions include Thr32, Arg37, Glu58–Val60, Gly86–Arg89, and Gln93. Positions Gly127–Asp163 are LID. Arg128 is a binding site for ATP. Residues Cys131, Cys134, Cys150, and Cys153 each coordinate Zn(2+). AMP contacts are provided by Arg160 and Arg171. Ala199 contacts ATP.

The protein belongs to the adenylate kinase family. In terms of assembly, monomer.

Its subcellular location is the cytoplasm. It catalyses the reaction AMP + ATP = 2 ADP. It participates in purine metabolism; AMP biosynthesis via salvage pathway; AMP from ADP: step 1/1. In terms of biological role, catalyzes the reversible transfer of the terminal phosphate group between ATP and AMP. Plays an important role in cellular energy homeostasis and in adenine nucleotide metabolism. In Dehalococcoides mccartyi (strain ATCC BAA-2100 / JCM 16839 / KCTC 5957 / BAV1), this protein is Adenylate kinase.